Here is a 129-residue protein sequence, read N- to C-terminus: Follitropin subunit beta (129 aa).

Residues M1–S20 form the signal peptide. 6 disulfides stabilise this stretch: C21–C69, C35–C84, C38–C122, C46–C100, C50–C102, and C105–C112. N-linked (GlcNAc...) asparagine glycans are attached at residues N25 and N42.

This sequence belongs to the glycoprotein hormones subunit beta family. As to quaternary structure, heterodimer. The active follitropin is a heterodimer composed of an alpha chain/CGA shared with other hormones and a unique beta chain/FSHB shown here.

It localises to the secreted. Functionally, together with the alpha chain CGA constitutes follitropin, the follicle-stimulating hormone, and provides its biological specificity to the hormone heterodimer. Binds FSHR, a G protein-coupled receptor, on target cells to activate downstream signaling pathways. Follitropin is involved in follicle development and spermatogenesis in reproductive organs. This is Follitropin subunit beta (FSHB) from Bubalus bubalis (Domestic water buffalo).